The sequence spans 414 residues: DNA primase small subunit PriS (414 aa).

Catalysis depends on residues Asp98, Asp100, and Asp312.

The protein belongs to the eukaryotic-type primase small subunit family. As to quaternary structure, heterodimer of a small subunit (PriS) and a large subunit (PriL). Requires Mg(2+) as cofactor. It depends on Mn(2+) as a cofactor.

In terms of biological role, catalytic subunit of DNA primase, an RNA polymerase that catalyzes the synthesis of short RNA molecules used as primers for DNA polymerase during DNA replication. The small subunit contains the primase catalytic core and has DNA synthesis activity on its own. Binding to the large subunit stabilizes and modulates the activity, increasing the rate of DNA synthesis while decreasing the length of the DNA fragments, and conferring RNA synthesis capability. The DNA polymerase activity may enable DNA primase to also catalyze primer extension after primer synthesis. May also play a role in DNA repair. The polypeptide is DNA primase small subunit PriS (Methanosarcina barkeri (strain Fusaro / DSM 804)).